Reading from the N-terminus, the 83-residue chain is Putative membrane protein insertion efficiency factor (83 aa).

The disordered stretch occupies residues 63-83 (GGNDPVPDHFSLRRNKTDISD). Residues 68–83 (VPDHFSLRRNKTDISD) show a composition bias toward basic and acidic residues.

Belongs to the UPF0161 family.

The protein localises to the cell membrane. Could be involved in insertion of integral membrane proteins into the membrane. This chain is Putative membrane protein insertion efficiency factor, found in Streptococcus agalactiae serotype III (strain NEM316).